The chain runs to 602 residues: Aryl hydrocarbon receptor protein 1 (602 aa).

A propeptide spanning residues 1–2 (MY) is cleaved from the precursor. Basic residues predominate over residues 1–12 (MYASKRRQRNFK). The disordered stretch occupies residues 1–28 (MYASKRRQRNFKRVRDPPKQLTNTNPSK). 2 consecutive short sequence motifs (nuclear localization signal) follow at residues 5–8 (KRRQ) and 28–33 (KRHRER). A bHLH domain is found at 18–71 (PKQLTNTNPSKRHRERLNGELETVAMLLPYDSSTISRLDKLSVLRLAVSFLQCK). Required for maintaining the overall integrity of the AHR:ARNT heterodimer and its transcriptional activity stretches follow at residues 41-73 (VAML…CKAH), 133-141 (SLKSLGGFI), and 266-268 (ICV). Residues 55-63 (LDKLSVLRL) carry the Nuclear export signal motif. Residues 126-196 (ESNFEEISLK…QQLDSNFHIP (71 aa)) enclose the PAS domain. Residues 440 to 467 (STSNSLFPSVPVPTPTTTKANRRRKENS) form a disordered region.

As to quaternary structure, interacts with daf-21/hsp90. Interacts with aha-1. Expressed in many distinct neuronal cells including RMED, RMEV, RMEL and RMER. Functions in URX neurons to promote aggregation behavior.

It is found in the nucleus. Probable ligand-activated transcriptional activator. Acts as a transcriptional regulator in GABAergic motor neuron cell fate specification and development. Promotes cell-type-specific expression of guanylate cyclase genes that have key roles in aggregation behavior and hyperoxia avoidance. Has no role in carbon dioxide avoidance. The chain is Aryl hydrocarbon receptor protein 1 from Caenorhabditis elegans.